A 134-amino-acid polypeptide reads, in one-letter code: Putative pre-16S rRNA nuclease (134 aa).

It belongs to the YqgF nuclease family.

Its subcellular location is the cytoplasm. Its function is as follows. Could be a nuclease involved in processing of the 5'-end of pre-16S rRNA. The chain is Putative pre-16S rRNA nuclease from Helicobacter pylori (strain G27).